The chain runs to 315 residues: D-alanine--D-alanine ligase B (315 aa).

An ATP-grasp domain is found at 109–309; that stretch reads KKVAAAAGVV…FAELLSWMVE (201 aa). 135 to 190 provides a ligand contact to ATP; that stretch reads PMKPPYVVKPVREGSSFGVVIVKEDQPHPPQVIGSADWKYGDEVMVEGYIAGRELT. Mg(2+)-binding residues include Asp259, Glu276, and Asn278.

This sequence belongs to the D-alanine--D-alanine ligase family. The cofactor is Mg(2+). It depends on Mn(2+) as a cofactor.

The protein resides in the cytoplasm. It carries out the reaction 2 D-alanine + ATP = D-alanyl-D-alanine + ADP + phosphate + H(+). It functions in the pathway cell wall biogenesis; peptidoglycan biosynthesis. Functionally, cell wall formation. The sequence is that of D-alanine--D-alanine ligase B from Brucella melitensis biotype 1 (strain ATCC 23456 / CCUG 17765 / NCTC 10094 / 16M).